A 749-amino-acid polypeptide reads, in one-letter code: Catalase-peroxidase 2 (749 aa).

An N-terminal signal peptide occupies residues 1-27; it reads MFKRTIPLFAAFTLAISPSIFPNYAHA. Positions 107 to 229 form a cross-link, tryptophyl-tyrosyl-methioninium (Trp-Tyr) (with M-255); the sequence is WHAAGTYRIY…LAATVMGLIY (123 aa). The Proton acceptor role is filled by His-108. The tryptophyl-tyrosyl-methioninium (Tyr-Met) (with W-107) cross-link spans 229-255; the sequence is YVNPEGPNGVPDPLAAAEKIRETFGRM. Residue His-270 coordinates heme b.

Belongs to the peroxidase family. Peroxidase/catalase subfamily. In terms of assembly, homodimer or homotetramer. The cofactor is heme b. Post-translationally, formation of the three residue Trp-Tyr-Met cross-link is important for the catalase, but not the peroxidase activity of the enzyme.

It carries out the reaction H2O2 + AH2 = A + 2 H2O. It catalyses the reaction 2 H2O2 = O2 + 2 H2O. In terms of biological role, bifunctional enzyme with both catalase and broad-spectrum peroxidase activity. In Legionella pneumophila subsp. pneumophila (strain Philadelphia 1 / ATCC 33152 / DSM 7513), this protein is Catalase-peroxidase 2.